The primary structure comprises 281 residues: Para-Rep C1 (281 aa).

One can recognise a CRESS-DNA virus Rep endonuclease domain in the interval 3 to 97 (TLQGTFWCFT…VAGPWTYGEL (95 aa)). Positions 10–13 (CFTL) match the RCR-1 motif. Residues E36 and H42 each contribute to the a divalent metal cation site. An RCR-2 motif is present at residues 42 to 44 (HLQ). The Nuclear localization signal signature appears at 51-71 (KRSTLKMMKELLPGAHLEVSK). Y80 functions as the For DNA cleavage activity in the catalytic mechanism. Residues 80–83 (YAMK) carry the RCR-3 motif. E85 serves as a coordination point for a divalent metal cation. A Nuclear localization signal motif is present at residues 97–103 (LLKKGSN). 173–181 (GPQGGEGKT) is an ATP binding site.

Belongs to the nanoviridea/circoviridae replication-associated protein family. In terms of assembly, homooligomer (Potential). Rep binds to repeated DNA motifs (iterons). The cofactor is Mg(2+). Mn(2+) is required as a cofactor.

Its subcellular location is the host nucleus. It carries out the reaction ATP + H2O = ADP + phosphate + H(+). In terms of biological role, initiates and terminates the replication only of its own subviral DNA molecule. The closed circular ssDNA genome is first converted to a superhelical dsDNA. Rep binds a specific hairpin at the genome origin of replication. Introduces an endonucleolytic nick within the intergenic region of the genome, thereby initiating the rolling circle replication (RCR). Following cleavage, binds covalently to the 5'-phosphate of DNA as a tyrosyl ester. The cleavage gives rise to a free 3'-OH that serves as a primer for the cellular DNA polymerase. The polymerase synthesizes the (+) strand DNA by rolling circle mechanism. After one round of replication, a Rep-catalyzed nucleotidyl transfer reaction releases a circular single-stranded virus genome, thereby terminating the replication. Displays origin-specific DNA cleavage, nucleotidyl transferase, ATPase and helicase activities. The protein is Para-Rep C1 (C1) of Milk vetch dwarf C1 alphasatellite (MVDC1A).